Here is a 98-residue protein sequence, read N- to C-terminus: MKYTNYDIIRRPVITEKSMGAMNEKKYTFIVDIRANKSMIKRAIEDVFGVTVETVNTSRYKGKKKRVGVHIGKRPDYKKAIVKLTEESKTIEFFEGIQ.

This sequence belongs to the universal ribosomal protein uL23 family. As to quaternary structure, part of the 50S ribosomal subunit. Contacts protein L29, and trigger factor when it is bound to the ribosome.

One of the early assembly proteins it binds 23S rRNA. One of the proteins that surrounds the polypeptide exit tunnel on the outside of the ribosome. Forms the main docking site for trigger factor binding to the ribosome. The sequence is that of Large ribosomal subunit protein uL23 from Clostridium kluyveri (strain NBRC 12016).